Reading from the N-terminus, the 460-residue chain is MDSKQSSELVFTVRRQKPELIAPAKPTPREIKFLSDIDDQEGLRFQIPVIQFYHKDSSMGRKDPVKVIKKAIAETLVFYYPFAGRLREGNGRKLMVDCTGEGIMFVEADADVTLEQFGDELQPPFPCLEELLYDVPDSAGVLNCPLLLIQVTRLRCGGFIFALRLNHTMSDAPGLVQFMTAVGEMARGASAPSILPVWCRELLNARNPPQVTCTHHEYDEVRDTKGTIIPLDDMVHKSFFFGPSEVSALRRFVPHHLRKCSTFELLTAVLWRCRTMSLKPDPEEEVRALCIVNARSRFNPPLPTGYYGNAFAFPVAVTTAAKLSKNPLGYALELVKKTKSDVTEEYMKSVADLMVLKGRPHFTVVRTFLVSDVTRGGFGEVDFGWGKAVYGGPAKGGVGAIPGVASFYIPFKNKKGENGIVVPICLPGFAMETFVKELDGMLKVDAPLDNSNYAIIRPAL.

Catalysis depends on proton acceptor residues H167 and D382.

The protein belongs to the plant acyltransferase family.

The catalysed reaction is benzyl alcohol + benzoyl-CoA = benzyl benzoate + CoA. In terms of biological role, probably involved in the formation of volatile ester benzylbenzoate. The chain is Benzyl alcohol O-benzoyltransferase (HSR201) from Nicotiana tabacum (Common tobacco).